We begin with the raw amino-acid sequence, 190 residues long: Threonylcarbamoyl-AMP synthase (190 aa).

A YrdC-like domain is found at arginine 7–glycine 190.

The protein belongs to the SUA5 family. TsaC subfamily.

It localises to the cytoplasm. It carries out the reaction L-threonine + hydrogencarbonate + ATP = L-threonylcarbamoyladenylate + diphosphate + H2O. Its function is as follows. Required for the formation of a threonylcarbamoyl group on adenosine at position 37 (t(6)A37) in tRNAs that read codons beginning with adenine. Catalyzes the conversion of L-threonine, HCO(3)(-)/CO(2) and ATP to give threonylcarbamoyl-AMP (TC-AMP) as the acyladenylate intermediate, with the release of diphosphate. In Escherichia coli O9:H4 (strain HS), this protein is Threonylcarbamoyl-AMP synthase.